Reading from the N-terminus, the 310-residue chain is Porphobilinogen deaminase (310 aa).

C242 carries the S-(dipyrrolylmethanemethyl)cysteine modification.

Belongs to the HMBS family. In terms of assembly, monomer. Dipyrromethane serves as cofactor.

It carries out the reaction 4 porphobilinogen + H2O = hydroxymethylbilane + 4 NH4(+). Its pathway is porphyrin-containing compound metabolism; protoporphyrin-IX biosynthesis; coproporphyrinogen-III from 5-aminolevulinate: step 2/4. Tetrapolymerization of the monopyrrole PBG into the hydroxymethylbilane pre-uroporphyrinogen in several discrete steps. The sequence is that of Porphobilinogen deaminase from Shewanella baltica (strain OS223).